We begin with the raw amino-acid sequence, 360 residues long: Chorismate synthase (360 aa).

Arginine 47 lines the NADP(+) pocket. FMN contacts are provided by residues 124–126 (RSS), 240–241 (NA), glycine 285, 300–304 (KPVAT), and arginine 326.

It belongs to the chorismate synthase family. In terms of assembly, homotetramer. The cofactor is FMNH2.

It carries out the reaction 5-O-(1-carboxyvinyl)-3-phosphoshikimate = chorismate + phosphate. It participates in metabolic intermediate biosynthesis; chorismate biosynthesis; chorismate from D-erythrose 4-phosphate and phosphoenolpyruvate: step 7/7. In terms of biological role, catalyzes the anti-1,4-elimination of the C-3 phosphate and the C-6 proR hydrogen from 5-enolpyruvylshikimate-3-phosphate (EPSP) to yield chorismate, which is the branch point compound that serves as the starting substrate for the three terminal pathways of aromatic amino acid biosynthesis. This reaction introduces a second double bond into the aromatic ring system. This is Chorismate synthase from Cytophaga hutchinsonii (strain ATCC 33406 / DSM 1761 / CIP 103989 / NBRC 15051 / NCIMB 9469 / D465).